Here is a 181-residue protein sequence, read N- to C-terminus: Putative ankyrin repeat protein RBE_0150 (181 aa).

ANK repeat units lie at residues 50-79, 83-114, 118-147, and 151-180; these read IGQK…KLGT, LGRT…DINA, SGST…DYFT, and LGQT…AGYY.

The sequence is that of Putative ankyrin repeat protein RBE_0150 from Rickettsia bellii (strain RML369-C).